The sequence spans 1230 residues: Protein transport protein Sec31A (1230 aa).

7 WD repeats span residues 4–47, 64–111, 120–160, 166–206, 209–254, 258–298, and 301–342; these read KEID…EIFE, SSSH…AGDK, KHTG…TPMT, QPPE…PIIK, DHSN…SPLR, NHAR…VLYE, and TNTQ…DGLR. The interval 161-470 is interaction with SEC13; it reads PGAKTQPPED…IEASQTEFEK (310 aa). The WD 8; interaction with SEC13 repeat unit spans residues 397 to 429; that stretch reads SFSFGGKLVTFESVAVPLQQGAEQQRRQPVFIS. Arg-423 carries the post-translational modification Asymmetric dimethylarginine. Ser-526 and Ser-531 each carry phosphoserine. Residue Lys-646 forms a Glycyl lysine isopeptide (Lys-Gly) (interchain with G-Cter in ubiquitin) linkage. Disordered regions lie at residues 789-905 and 924-1104; these read QGKP…ASNA and MYTA…PIGN. The residue at position 798 (Ser-798) is a Phosphoserine. The interaction with PDCD6 stretch occupies residues 799 to 1123; sequence SQSPYERQPL…TEKITKKPIP (325 aa). Positions 841-847 match the ALG-2-binding site motif-2 (ABS-2) motif; sequence GFIMQGN. The segment covering 866–876 has biased composition (pro residues); it reads QLPPYPQPQPY. Composition is skewed to low complexity over residues 930–940 and 959–975; these read ASSPTSSSAAS and PSSSAYALPPGTTGTPP. Polar residues-rich tracts occupy residues 981 to 995 and 1033 to 1064; these read PASQRTENQSFQDQA and PIMNPSGDPQSQGLQQQPSTPGPLSSHASFPQ. Residue Thr-1171 is modified to Phosphothreonine. A Phosphoserine modification is found at Ser-1173. Lys-1227 is covalently cross-linked (Glycyl lysine isopeptide (Lys-Gly) (interchain with G-Cter in ubiquitin)).

It belongs to the WD repeat SEC31 family. In terms of assembly, COPII is composed of at least 5 proteins: the SEC23/24 complex, the SEC13/31 complex and SAR1. SEC13 and SEC31 make a 2:2 tetramer that forms the edge element of the COPII outer coat. The tetramer self-assembles in multiple copies to form the complete polyhedral cage. Interacts (via WD 8) with SEC13. Interacts with PDCD6; interaction takes place in response to cytosolic calcium increase and leads to bridge together the BCR(KLHL12) complex and SEC31A, leading to monoubiquitination. Interacts with KLHL12. In terms of processing, monoubiquitinated by the BCR(KLHL12) E3 ubiquitin ligase complex, leading to regulate the size of COPII coats.

It is found in the cytoplasm. The protein resides in the cytoplasmic vesicle. It localises to the COPII-coated vesicle membrane. The protein localises to the endoplasmic reticulum membrane. In terms of biological role, component of the coat protein complex II (COPII) which promotes the formation of transport vesicles from the endoplasmic reticulum (ER). The coat has two main functions, the physical deformation of the endoplasmic reticulum membrane into vesicles and the selection of cargo molecules. The sequence is that of Protein transport protein Sec31A (Sec31a) from Mus musculus (Mouse).